Reading from the N-terminus, the 387-residue chain is Phosphoglycerate kinase (387 aa).

Substrate contacts are provided by residues D21–N23, R36, H59–R62, R113, and R146. ATP contacts are provided by residues K197, E314, and G340 to T343.

Belongs to the phosphoglycerate kinase family. As to quaternary structure, monomer.

Its subcellular location is the cytoplasm. The catalysed reaction is (2R)-3-phosphoglycerate + ATP = (2R)-3-phospho-glyceroyl phosphate + ADP. The protein operates within carbohydrate degradation; glycolysis; pyruvate from D-glyceraldehyde 3-phosphate: step 2/5. The sequence is that of Phosphoglycerate kinase from Pseudomonas fluorescens (strain Pf0-1).